A 366-amino-acid polypeptide reads, in one-letter code: MAGNTFGQLFTVTTFGESHGAGLGCIIDGCPPGLELSEADIQFDLDRRKPGTSRHVTQRRETDQVEILSGVFKGKTTGTPIALLIRNTDQRSKDYGNIAQSFRPGHADYTYWHKYGTRDYRGGGRSSARETAARVAAGAVAKKWLKEKFGTEITAYVTQVGEKEIRFEGCEHISQNPFFAANHSQIAELENYMDSVRKSLDSVGAKLHIEAANVPVGLGEPVFDRLDAEIAYAMMGINAVKGVEIGAGFDSVTQRGSEHGDELTPQGFLSNHSGGILGGISTGQDICVNIAIKPTSSIATPRRSIDINGNPIELATHGRHDPCVGLRAAPIAEAMLALVLIDHALRHRAQNADVAVDTPDIARSDK.

NADP(+) contacts are provided by R48 and R54. Residues 125–127 (RSS), 238–239 (NA), G278, 293–297 (KPTSS), and R319 contribute to the FMN site.

Belongs to the chorismate synthase family. In terms of assembly, homotetramer. Requires FMNH2 as cofactor.

The enzyme catalyses 5-O-(1-carboxyvinyl)-3-phosphoshikimate = chorismate + phosphate. It participates in metabolic intermediate biosynthesis; chorismate biosynthesis; chorismate from D-erythrose 4-phosphate and phosphoenolpyruvate: step 7/7. In terms of biological role, catalyzes the anti-1,4-elimination of the C-3 phosphate and the C-6 proR hydrogen from 5-enolpyruvylshikimate-3-phosphate (EPSP) to yield chorismate, which is the branch point compound that serves as the starting substrate for the three terminal pathways of aromatic amino acid biosynthesis. This reaction introduces a second double bond into the aromatic ring system. This chain is Chorismate synthase, found in Neisseria meningitidis serogroup C / serotype 2a (strain ATCC 700532 / DSM 15464 / FAM18).